The chain runs to 216 residues: Pyrophosphatase PpaX (216 aa).

Asp12 serves as the catalytic Nucleophile.

This sequence belongs to the HAD-like hydrolase superfamily. PpaX family. Requires Mg(2+) as cofactor.

It carries out the reaction diphosphate + H2O = 2 phosphate + H(+). Its function is as follows. Hydrolyzes pyrophosphate formed during P-Ser-HPr dephosphorylation by HPrK/P. Might play a role in controlling the intracellular pyrophosphate pool. The chain is Pyrophosphatase PpaX from Bacillus pumilus (strain SAFR-032).